The sequence spans 510 residues: NAD(P)H-quinone oxidoreductase subunit 2 B, chloroplastic (510 aa).

Transmembrane regions (helical) follow at residues 24-44 (LLLFDGSFIFPECILIFGLIL), 59-79 (WFYFISSTSLVMSIAALLFRW), 99-119 (IFQFLILLCSTLCIPLSVEYI), 124-144 (MAITEFLLFVLTATLGGMFLC), 150-170 (ITIFVAPECFSLCSYLLSGYT), 184-204 (LLMGGASSSILVHGFSWLYGL), 229-249 (ISIALIFITVGIGFKLSLAPF), 295-315 (WHLLLEILAILSMILGNLIAI), 323-343 (MLAYSSIGQIGYVIIGIIVGD), 354-374 (YMLFYISMNLGTFARIVLFGL), 395-415 (ALSLALCLLSLGGLPPLAGFF), 418-438 (LHLFWCGWQAGLYFLVSIGLL), and 484-504 (MIVCVIASTIPGISMNPILAI).

This sequence belongs to the complex I subunit 2 family. In terms of assembly, NDH is composed of at least 16 different subunits, 5 of which are encoded in the nucleus.

It is found in the plastid. The protein resides in the chloroplast thylakoid membrane. It carries out the reaction a plastoquinone + NADH + (n+1) H(+)(in) = a plastoquinol + NAD(+) + n H(+)(out). The enzyme catalyses a plastoquinone + NADPH + (n+1) H(+)(in) = a plastoquinol + NADP(+) + n H(+)(out). In terms of biological role, NDH shuttles electrons from NAD(P)H:plastoquinone, via FMN and iron-sulfur (Fe-S) centers, to quinones in the photosynthetic chain and possibly in a chloroplast respiratory chain. The immediate electron acceptor for the enzyme in this species is believed to be plastoquinone. Couples the redox reaction to proton translocation, and thus conserves the redox energy in a proton gradient. The chain is NAD(P)H-quinone oxidoreductase subunit 2 B, chloroplastic from Acorus calamus (Sweet flag).